The sequence spans 319 residues: tRNA U34 carboxymethyltransferase (319 aa).

Residues Lys-88, Trp-102, Lys-107, Gly-126, 176-177 (LE), Met-192, Tyr-196, and Arg-311 contribute to the carboxy-S-adenosyl-L-methionine site.

This sequence belongs to the class I-like SAM-binding methyltransferase superfamily. CmoB family. In terms of assembly, homotetramer.

The catalysed reaction is carboxy-S-adenosyl-L-methionine + 5-hydroxyuridine(34) in tRNA = 5-carboxymethoxyuridine(34) in tRNA + S-adenosyl-L-homocysteine + H(+). Functionally, catalyzes carboxymethyl transfer from carboxy-S-adenosyl-L-methionine (Cx-SAM) to 5-hydroxyuridine (ho5U) to form 5-carboxymethoxyuridine (cmo5U) at position 34 in tRNAs. This is tRNA U34 carboxymethyltransferase from Pseudomonas syringae pv. tomato (strain ATCC BAA-871 / DC3000).